The following is a 604-amino-acid chain: NRPS-independent siderophore synthetase-like protein ankE (604 aa).

The enzyme catalyses cyclo(L-arginyl-(Z)-dehydro-4-O-homoseryl-tyrosyl) + citrate + ATP = NK13650 B + AMP + diphosphate + H(+). Its pathway is secondary metabolite biosynthesis. Its function is as follows. NRPS-independent siderophore synthetase-like protein; part of the ank cluster that mediates the biosynthesis of NK13650 C, a highly modified cyclo-arginine-tyrosine dipeptide. AnkE is responsible of the production of NK13650 B via ligation of citrate to the ankD product. Within the pathway, the cyclodipeptide synthase ankA acts as the scaffold-generating enzyme and is responsible for formation of the cyclo-Arg-Tyr diketopiperazine (cRY) from L-Arg and L-Tyr. The ankA product cRY is desaturated by the cytochrome P450 monooxygenase ankB to yield a dehydro-cyclodipeptide intermediate. The FAD-dependent monooxygenase ankC then installs the m-OH, ankD catalyzes the attachment of L-homoserine, and ankE ligates citrate to the ankD product to yield NK13650 B. The O-methyltransferase ankF is responsible for methylation of the C-17 phenol group of NK13650 B to produce NK13650 D. Amidation of NK13650 D with L-Asp by ankG then leads to the production of NK13650 C, whereas amidation of NK13650 B produces NK13650 A. This chain is NRPS-independent siderophore synthetase-like protein ankE, found in Aspergillus thermomutatus (Neosartorya pseudofischeri).